Reading from the N-terminus, the 47-residue chain is Defensin NsD7 (47 aa).

Cystine bridges form between Cys3/Cys47, Cys14/Cys34, Cys20/Cys41, and Cys24/Cys43. Residues Lys4, His33, Lys36, and Arg39 each contribute to the a 1,2-diacyl-sn-glycero-3-phosphate site.

Belongs to the DEFL family. As to quaternary structure, in the presence of phosphatidic acid (PA), forms right-handed double helices which tend to bundle into fibrils. Each helix is a repetition of dimers containing 2 bound molecules of PA per dimer. Dimers are arranged orthogonally in a tip-to-tip configuration with 1 molecule of PA located at the dimer contact interface. Association of 2 helices to form a double helix depends on intercalating isoleucine residues Ile-15 and Ile-37. Bundling of double helices into fibrils depends on Arg-26.

The protein localises to the vacuole. Its function is as follows. Plant defense peptide. Disrupts membranes containing phosphatidic acid (PA) via a PA-dependent oligomerization process. The protein is Defensin NsD7 of Nicotiana suaveolens (Australian tobacco).